The following is a 509-amino-acid chain: GMP synthase [glutamine-hydrolyzing] (509 aa).

In terms of domain architecture, Glutamine amidotransferase type-1 spans 4–193; that stretch reads NVLILDFGSQ…LVKIAQVPQN (190 aa). Residue Cys79 is the Nucleophile of the active site. Catalysis depends on residues His167 and Glu169. A GMPS ATP-PPase domain is found at 194–384; that stretch reads FTPNAFVSDM…LGIDAELLGR (191 aa). 221–227 contacts ATP; the sequence is SGGVDST.

As to quaternary structure, homodimer.

It carries out the reaction XMP + L-glutamine + ATP + H2O = GMP + L-glutamate + AMP + diphosphate + 2 H(+). Its pathway is purine metabolism; GMP biosynthesis; GMP from XMP (L-Gln route): step 1/1. Its function is as follows. Catalyzes the synthesis of GMP from XMP. The protein is GMP synthase [glutamine-hydrolyzing] of Flavobacterium psychrophilum (strain ATCC 49511 / DSM 21280 / CIP 103535 / JIP02/86).